The sequence spans 311 residues: MEVPENIKKRVTIPFEEHFYAGHTACQGCGASLGLRYVLKAYGKKTILVIPACCSTIIAGPWPYSAIDANLFHTAFETTGAVISGIEAALKAMGYKVKGEDGIMVVGWAGDGGTADIGLQALSGFLERGHDAVYIMYDNEAYMNTGIQRSSSTPYGAWTTNTPGGRRHFLEKRHKKKVIDIVIAHRIPYAATASIAYPEDFIRKLKKAQKISGPSFIQLFAPCPTGWRAPTDKSIEIARLAVQTAYFPLFEYENGKYKINMPNPKKEPKPIEEFLKLQGRFKYMTKEDIETLQKWVLEEWERLKKLAEVFG.

In terms of assembly, heterotetramer of one alpha, one beta, one delta and one gamma chain.

The catalysed reaction is 3-methyl-2-oxobutanoate + 2 oxidized [2Fe-2S]-[ferredoxin] + CoA = 2-methylpropanoyl-CoA + 2 reduced [2Fe-2S]-[ferredoxin] + CO2 + H(+). This Pyrococcus furiosus (strain ATCC 43587 / DSM 3638 / JCM 8422 / Vc1) protein is Ketoisovalerate oxidoreductase subunit VorB (vorB).